The following is a 358-amino-acid chain: Alanine racemase (358 aa).

The active-site Proton acceptor; specific for D-alanine is the Lys35. Lys35 is modified (N6-(pyridoxal phosphate)lysine). Substrate is bound at residue Arg130. Tyr255 (proton acceptor; specific for L-alanine) is an active-site residue. Substrate is bound at residue Met303.

Belongs to the alanine racemase family. It depends on pyridoxal 5'-phosphate as a cofactor.

It catalyses the reaction L-alanine = D-alanine. Its pathway is amino-acid biosynthesis; D-alanine biosynthesis; D-alanine from L-alanine: step 1/1. Its function is as follows. Catalyzes the interconversion of L-alanine and D-alanine. May also act on other amino acids. The protein is Alanine racemase (alr) of Shewanella oneidensis (strain ATCC 700550 / JCM 31522 / CIP 106686 / LMG 19005 / NCIMB 14063 / MR-1).